The sequence spans 694 residues: Scarecrow-like protein 33 (694 aa).

The interval proline 289–lysine 313 is disordered. A GRAS domain is found at asparagine 309–valine 692. Residues proline 316 to glutamine 376 form a leucine repeat I (LRI) region. The tract at residues tyrosine 395–glycine 462 is VHIID. The short motif at isoleucine 428–aspartate 432 is the VHIID element. The segment at glutamate 478–aspartate 510 is leucine repeat II (LRII). The interval valine 519 to asparagine 613 is PFYRE. The interval alanine 616–valine 692 is SAW.

Belongs to the GRAS family. Interacts with SNRNP35.

Its subcellular location is the nucleus. Probable transcription factor involved in plant development. The chain is Scarecrow-like protein 33 (SCL33) from Arabidopsis thaliana (Mouse-ear cress).